Consider the following 156-residue polypeptide: Small ribosomal subunit protein bS16 (156 aa).

A compositionally biased stretch (basic and acidic residues) spans 85–120 (GESGAEGTLKSKSEKEAFVAPERDSVILPEEPKQEE). Positions 85–156 (GESGAEGTLK…APAEDAEKSE (72 aa)) are disordered. Positions 132–150 (PAEEAAEAPAEEAAEAPAE) are enriched in acidic residues.

It belongs to the bacterial ribosomal protein bS16 family.

The polypeptide is Small ribosomal subunit protein bS16 (Micrococcus luteus (strain ATCC 4698 / DSM 20030 / JCM 1464 / CCM 169 / CCUG 5858 / IAM 1056 / NBRC 3333 / NCIMB 9278 / NCTC 2665 / VKM Ac-2230) (Micrococcus lysodeikticus)).